The sequence spans 83 residues: Kunitz-type serine protease inhibitor scutellin-4 (83 aa).

The N-terminal stretch at 1–24 is a signal peptide; the sequence is MSSGGLLLLLGLLTLWAELTPVSS. The 51-residue stretch at 31–81 folds into the BPTI/Kunitz inhibitor domain; the sequence is CELPADSGPCRGILHAFYYHPVHRTCLGFIYGGCYGNANNFKTIDECKRTC. Cystine bridges form between C31/C81, C40/C64, and C56/C77.

The protein belongs to the venom Kunitz-type family. Expressed by the venom gland.

It localises to the secreted. In terms of biological role, serine protease inhibitor. The protein is Kunitz-type serine protease inhibitor scutellin-4 of Oxyuranus scutellatus scutellatus (Australian taipan).